We begin with the raw amino-acid sequence, 300 residues long: 4-hydroxy-tetrahydrodipicolinate synthase (300 aa).

A pyruvate-binding site is contributed by Thr-49. Tyr-137 (proton donor/acceptor) is an active-site residue. Residue Lys-165 is the Schiff-base intermediate with substrate of the active site. Residue Ile-207 coordinates pyruvate.

The protein belongs to the DapA family. As to quaternary structure, homotetramer; dimer of dimers.

The protein localises to the cytoplasm. It catalyses the reaction L-aspartate 4-semialdehyde + pyruvate = (2S,4S)-4-hydroxy-2,3,4,5-tetrahydrodipicolinate + H2O + H(+). It functions in the pathway amino-acid biosynthesis; L-lysine biosynthesis via DAP pathway; (S)-tetrahydrodipicolinate from L-aspartate: step 3/4. Functionally, catalyzes the condensation of (S)-aspartate-beta-semialdehyde [(S)-ASA] and pyruvate to 4-hydroxy-tetrahydrodipicolinate (HTPA). In Nitrosospira multiformis (strain ATCC 25196 / NCIMB 11849 / C 71), this protein is 4-hydroxy-tetrahydrodipicolinate synthase.